Reading from the N-terminus, the 251-residue chain is Flap endonuclease Xni (251 aa).

Aspartate 104 lines the Mg(2+) pocket. Positions valine 160–lysine 250 constitute a 5'-3' exonuclease domain. Leucine 171, alanine 172, proline 180, valine 182, and valine 185 together coordinate K(+). An interaction with DNA region spans residues glycine 184–threonine 189.

Belongs to the Xni family. The cofactor is Mg(2+). It depends on K(+) as a cofactor.

Its function is as follows. Has flap endonuclease activity. During DNA replication, flap endonucleases cleave the 5'-overhanging flap structure that is generated by displacement synthesis when DNA polymerase encounters the 5'-end of a downstream Okazaki fragment. The polypeptide is Flap endonuclease Xni (Yersinia pestis bv. Antiqua (strain Nepal516)).